An 80-amino-acid chain; its full sequence is MSQEAILEKVRSIVAEQLSVEAGEVKPDSNFQNDLGADSLDTVELVMALEEAFDIEIPDEAAEGIATVGDAVKYIEEKQS.

Residues 4–79 (EAILEKVRSI…DAVKYIEEKQ (76 aa)) enclose the Carrier domain. S39 carries the post-translational modification O-(pantetheine 4'-phosphoryl)serine.

Belongs to the acyl carrier protein (ACP) family. 4'-phosphopantetheine is transferred from CoA to a specific serine of apo-ACP by AcpS. This modification is essential for activity because fatty acids are bound in thioester linkage to the sulfhydryl of the prosthetic group.

It is found in the cytoplasm. The protein operates within lipid metabolism; fatty acid biosynthesis. Carrier of the growing fatty acid chain in fatty acid biosynthesis. The sequence is that of Acyl carrier protein from Prochlorococcus marinus (strain NATL1A).